Reading from the N-terminus, the 858-residue chain is Heat shock protein 105 kDa (858 aa).

Ser-2 carries the N-acetylserine modification. Lys-471 is subject to N6-acetyllysine. 2 disordered regions span residues 500 to 585 (KVPT…PPEA) and 801 to 858 (VTQP…MDLD). Acidic residues predominate over residues 504–515 (EEEDGSSVEADM). 2 positions are modified to phosphoserine: Ser-509 and Ser-510. The span at 533–555 (QQDNSEAGTQPQVQTDGQQTSQS) shows a compositional bias: polar residues. Ser-558 carries the phosphoserine modification. A Phosphothreonine modification is found at Thr-562. Composition is skewed to basic and acidic residues over residues 564-585 (EENK…PPEA) and 806-815 (PKIESPKLER). A Phosphoserine modification is found at Ser-810. Thr-816 carries the post-translational modification Phosphothreonine.

The protein belongs to the heat shock protein 70 family. As to quaternary structure, interacts with HSPA8/HSC70. Interacts with HSPA1A (via NBD) and HSPA1B (via NBD). Post-translationally, phosphorylation on Ser-509 may be important for regulation of the HSPA8/HSC70 chaperone activity.

It localises to the cytoplasm. In terms of biological role, acts as a nucleotide-exchange factor (NEF) for chaperone proteins HSPA1A and HSPA1B, promoting the release of ADP from HSPA1A/B thereby triggering substrate release. Prevents the aggregation of denatured proteins in cells under severe stress, on which the ATP levels decrease markedly. Inhibits HSPA8/HSC70 ATPase and chaperone activities. The sequence is that of Heat shock protein 105 kDa (Hsph1) from Rattus norvegicus (Rat).